The sequence spans 280 residues: Thioesterase pynI (280 aa).

Residues 136–145 show a composition bias toward acidic residues; sequence LADDSDDEDN. The disordered stretch occupies residues 136–167; it reads LADDSDDEDNRSDASDASDDGSTMSDEEEEDD.

It belongs to the AMT4 thioesterase family.

The protein operates within secondary metabolite biosynthesis. Thioesterase; part of the gene cluster that mediates the biosynthesis of pyranonigrins, a family of antioxidative compounds. The first step of pyranonigrins biosynthesis is performed by the hybrid PKS-NRPS synthetase that condenses 6 malonyl-CoA units to an acetyl starter unit, to form a 1,3,5-trioxotetradecane-6,8-dienyl-ACP. The enoyl reductase (ER) domain of pynA is likely to be functional during the first two rounds of polyketide chain extension, to generate the saturated C-C bonds of the alkyl side chain. PynA subsequently forms the amide bond between the acyl chain and L-serine. Although pynA has a terminal reductase domain, it appears to require the thioesterase pynI for the release of the straight-chain intermediate from pynA via the formation of a tetramic acid pyranonigrin J. The methyltransferase pynC then coverts pyranonigrin J to pyranonigrin I via N-methylation. The FAD-dependent monooxygenase pynG catalyzes an epoxidation-mediated cyclization to form the dihydro-gamma-pyrone moiety, followed by pynD-catalyzed oxidation of the alcohol to the ketone and enolization to yield the characteristic tetramic acid-fused gamma-pyrone core of pyranonigrin H. Pyranonigrin H is substrate of pynH for dehydration-mediated exo-methylene formation from the serine side chain to produce pyranonigrin E, before the oxidase pynE reduces the exo-methylene of pyranonigrin E into a pendant methyl to form pyranonigrin G. The FAD-linked oxidoreductase pynB performs the reverse reaction and converts pyranonigrin G back to pyranonigrin E. This is Thioesterase pynI from Aspergillus niger (strain ATCC MYA-4892 / CBS 513.88 / FGSC A1513).